We begin with the raw amino-acid sequence, 235 residues long: Large ribosomal subunit protein uL1 (235 aa).

It belongs to the universal ribosomal protein uL1 family. In terms of assembly, part of the 50S ribosomal subunit.

Its function is as follows. Binds directly to 23S rRNA. The L1 stalk is quite mobile in the ribosome, and is involved in E site tRNA release. Functionally, protein L1 is also a translational repressor protein, it controls the translation of the L11 operon by binding to its mRNA. The polypeptide is Large ribosomal subunit protein uL1 (Mycobacterium sp. (strain JLS)).